A 95-amino-acid polypeptide reads, in one-letter code: Basic phospholipase A2 (95 aa).

2 N6-palmitoyl lysine lipidation sites follow: lysine 7 and lysine 10. Ca(2+) contacts are provided by tyrosine 23, glycine 25, and glycine 27. Intrachain disulfides connect cysteine 24–cysteine 40, cysteine 39–cysteine 77, cysteine 46–cysteine 70, cysteine 53–cysteine 63, and cysteine 57–cysteine 68. Histidine 43 is an active-site residue. Aspartate 44 contacts Ca(2+). Aspartate 71 is a catalytic residue.

Monomer. It depends on Ca(2+) as a cofactor. As to expression, expressed by the venom gland.

It is found in the secreted. It catalyses the reaction a 1,2-diacyl-sn-glycero-3-phosphocholine + H2O = a 1-acyl-sn-glycero-3-phosphocholine + a fatty acid + H(+). Functionally, PLA2 catalyzes the calcium-dependent hydrolysis of the 2-acyl groups in 3-sn-phosphoglycerides. Induces local and systemic myotoxicity in an intramuscular mouse model. Induces local edema in a mouse footpad assay. Does not exhibit any anticoagulant effects. Does not mediate an antibacterial effect against Gram-negative and Gram-positive bacteria. The sequence is that of Basic phospholipase A2 from Agkistrodon piscivorus leucostoma (Western cottonmouth).